A 251-amino-acid polypeptide reads, in one-letter code: CDP-diacylglycerol pyrophosphatase (251 aa).

Residues 5 to 25 form a helical membrane-spanning segment; the sequence is GYFLLAVIVIVAAAGVGYWKF.

The protein belongs to the Cdh family.

Its subcellular location is the cell inner membrane. The enzyme catalyses a CDP-1,2-diacyl-sn-glycerol + H2O = a 1,2-diacyl-sn-glycero-3-phosphate + CMP + 2 H(+). It functions in the pathway phospholipid metabolism; CDP-diacylglycerol degradation; phosphatidate from CDP-diacylglycerol: step 1/1. This Salmonella paratyphi A (strain ATCC 9150 / SARB42) protein is CDP-diacylglycerol pyrophosphatase.